A 248-amino-acid chain; its full sequence is 3-oxoacyl-[acyl-carrier-protein] reductase FabG (248 aa).

NADP(+)-binding positions include 14–17 (GGSR), 65–66 (DV), and asparagine 92. Serine 144 serves as a coordination point for substrate. Tyrosine 157 acts as the Proton acceptor in catalysis. NADP(+)-binding positions include 157–161 (YAAAK) and isoleucine 190.

Belongs to the short-chain dehydrogenases/reductases (SDR) family. Homotetramer.

It catalyses the reaction a (3R)-hydroxyacyl-[ACP] + NADP(+) = a 3-oxoacyl-[ACP] + NADPH + H(+). Its pathway is lipid metabolism; fatty acid biosynthesis. Functionally, catalyzes the NADPH-dependent reduction of beta-ketoacyl-ACP substrates to beta-hydroxyacyl-ACP products, the first reductive step in the elongation cycle of fatty acid biosynthesis. In Chlamydia muridarum (strain MoPn / Nigg), this protein is 3-oxoacyl-[acyl-carrier-protein] reductase FabG (fabG).